The primary structure comprises 953 residues: TPR repeat-containing protein ZIP4 (953 aa).

The stretch at 129 to 162 (ASFFHRSGLAWLDLGRVDLASACFEKATPLVSAA) is one TPR 1 repeat. Positions 248 to 269 (AASPSSSSPRTPPYGGATPKTP) are disordered. TPR repeat units lie at residues 432–465 (HALLWNCGTEHFRAKNYDTSADLIERSMLYVSRD) and 473–506 (ADCFRVLSICHIALQHLDRALEFVNEAYKVEPNI). The disordered stretch occupies residues 925–953 (VSGDEPDECSQEEAPKASISGSMSQPVLV). The span at 943–953 (ISGSMSQPVLV) shows a compositional bias: polar residues.

Interacts with HEI10 and SHOC1.

The protein localises to the nucleus. It localises to the chromosome. Required for crossover formation, complete synapsis of homologous chromosomes and bivalent formation during meiosis. Is specific to recombination events resulting in interference-sensitive crossovers (class I meiotic crossover) and works cooperatively with MER3 to promote crossovers. The sequence is that of TPR repeat-containing protein ZIP4 from Oryza sativa subsp. japonica (Rice).